A 284-amino-acid chain; its full sequence is Serine protease 57 (284 aa).

The N-terminal stretch at 1 to 35 (MPSSTAMVPGTRGGWHCLVLTTAAALTQLMWLPGC) is a signal peptide. One can recognise a Peptidase S1 domain in the interval 40 to 269 (IVGGHEVTPH…FVTWIWDVVR (230 aa)). An intrachain disulfide couples C65 to C81. Catalysis depends on charge relay system residues H80 and D128. N135 carries an N-linked (GlcNAc...) asparagine glycan. 3 disulfide bridges follow: C163–C230, C194–C208, and C220–C245. S224 (charge relay system) is an active-site residue.

This sequence belongs to the peptidase S1 family. In terms of processing, after cleavage of the signal peptide, the N-terminus is probably further processed by CTSC. Processing by CTSC is probably required for accumulation in cytoplasmic granules; in the absence of CTSC the protein does not accumulate. N-glycosylated.

It is found in the cytoplasmic granule lumen. The protein resides in the secreted. Serine protease that cleaves preferentially after Arg residues. Can also cleave after citrulline (deimidated arginine) and methylarginine residues. This chain is Serine protease 57 (Prss57), found in Mus musculus (Mouse).